The primary structure comprises 147 residues: UPF0735 ACT domain-containing protein GK2605 (147 aa).

Residues 69–144 (TLFFHLEDRS…FVEKVEIVGS (76 aa)) enclose the ACT domain.

This sequence belongs to the UPF0735 family.

The polypeptide is UPF0735 ACT domain-containing protein GK2605 (Geobacillus kaustophilus (strain HTA426)).